Consider the following 445-residue polypeptide: tRNA-2-methylthio-N(6)-dimethylallyladenosine synthase (445 aa).

Residues Lys3–Arg124 form the MTTase N-terminal domain. Cys12, Cys48, Cys87, Cys162, Cys166, and Cys169 together coordinate [4Fe-4S] cluster. Residues Tyr148–Ala380 form the Radical SAM core domain. One can recognise a TRAM domain in the interval Gln383–Leu445.

This sequence belongs to the methylthiotransferase family. MiaB subfamily. Monomer. [4Fe-4S] cluster is required as a cofactor.

The protein localises to the cytoplasm. It carries out the reaction N(6)-dimethylallyladenosine(37) in tRNA + (sulfur carrier)-SH + AH2 + 2 S-adenosyl-L-methionine = 2-methylsulfanyl-N(6)-dimethylallyladenosine(37) in tRNA + (sulfur carrier)-H + 5'-deoxyadenosine + L-methionine + A + S-adenosyl-L-homocysteine + 2 H(+). Its function is as follows. Catalyzes the methylthiolation of N6-(dimethylallyl)adenosine (i(6)A), leading to the formation of 2-methylthio-N6-(dimethylallyl)adenosine (ms(2)i(6)A) at position 37 in tRNAs that read codons beginning with uridine. This is tRNA-2-methylthio-N(6)-dimethylallyladenosine synthase from Rickettsia prowazekii (strain Madrid E).